Consider the following 216-residue polypeptide: Pyridoxine/pyridoxamine 5'-phosphate oxidase (216 aa).

Substrate-binding positions include 12 to 15 (RREY) and K70. FMN contacts are provided by residues 65–70 (RLVLLK), 80–81 (YT), R86, K87, and Q109. The substrate site is built by Y127, R131, and S135. Residues 144–145 (QS) and W189 each bind FMN. 195-197 (RMH) serves as a coordination point for substrate. R199 lines the FMN pocket.

It belongs to the pyridoxamine 5'-phosphate oxidase family. In terms of assembly, homodimer. FMN serves as cofactor.

The enzyme catalyses pyridoxamine 5'-phosphate + O2 + H2O = pyridoxal 5'-phosphate + H2O2 + NH4(+). It carries out the reaction pyridoxine 5'-phosphate + O2 = pyridoxal 5'-phosphate + H2O2. It participates in cofactor metabolism; pyridoxal 5'-phosphate salvage; pyridoxal 5'-phosphate from pyridoxamine 5'-phosphate: step 1/1. The protein operates within cofactor metabolism; pyridoxal 5'-phosphate salvage; pyridoxal 5'-phosphate from pyridoxine 5'-phosphate: step 1/1. Catalyzes the oxidation of either pyridoxine 5'-phosphate (PNP) or pyridoxamine 5'-phosphate (PMP) into pyridoxal 5'-phosphate (PLP). The sequence is that of Pyridoxine/pyridoxamine 5'-phosphate oxidase from Sodalis glossinidius (strain morsitans).